A 577-amino-acid polypeptide reads, in one-letter code: MGSRHFEGIYDHVGHFGRFQRVLYFICAFQNISCGIHYLASVFMGVTPHHVCRPPGNVSQVVFHNHSNWSLEDTGALLSSGQKDYVTVQLQNGEIWELSRCSRNKRENTSSLGYEYTGSKKEFPCVDGYIYDQNTWKSTAVTQWNLVCDRKWLAMLIQPLFMFGVLLGSVTFGYFSDRLGRRVVLWATSSSMFLFGIAAAFAVDYYTFMAARFFLAMVASGYLVVGFVYVMEFIGMKSRTWASVHLHSFFAVGTLLVALTGYLVRTWWLYQMILSTVTVPFILCCWVLPETPFWLLSEGRYEEAQKIVDIMAKWNRASSCKLSELLSLDLQGPVSNSPTEVQKHNLSYLFYNWSITKRTLTVWLIWFTGSLGFYSFSLNSVNLGGNEYLNLFLLGVVEIPAYTFVCIAMDKVGRRTVLAYSLFCSALACGVVMVIPQKHYILGVVTAMVGKFAIGAAFGLIYLYTAELYPTIVRSLAVGSGSMVCRLASILAPFSVDLSSIWIFIPQLFVGTMALLSGVLTLKLPETLGKRLATTWEEAAKLESENESKSSKLLLTTNNSGLEKTEAITPRDSGLGE.

A helical transmembrane segment spans residues leucine 23–phenylalanine 43. Residues asparagine 57, asparagine 65, asparagine 68, and asparagine 108 are each glycosylated (N-linked (GlcNAc...) asparagine). A run of 5 helical transmembrane segments spans residues tryptophan 152–phenylalanine 172, valine 183–valine 203, phenylalanine 214–isoleucine 234, valine 244–valine 264, and tryptophan 268–leucine 288. Asparagine 345 and asparagine 352 each carry an N-linked (GlcNAc...) asparagine glycan. A run of 6 helical transmembrane segments spans residues threonine 359–asparagine 379, leucine 389–methionine 409, threonine 416–proline 436, isoleucine 441–isoleucine 461, leucine 476–valine 496, and isoleucine 501–threonine 521. The segment at glutamate 543–glutamate 577 is disordered. 2 N-linked (GlcNAc...) asparagine glycosylation sites follow: asparagine 546 and asparagine 558. Residues serine 551–serine 560 are compositionally biased toward low complexity.

This sequence belongs to the major facilitator (TC 2.A.1) superfamily. Organic cation transporter (TC 2.A.1.19) family. In terms of tissue distribution, expressed in testis and epididymis (at protein level). Expressed in endometrium (at protein level); highly expressed during the normal secretory phase, but expression is significantly reduced in the proliferative phase. Expressed at lower levels in adult tissues including bone marrow (at protein level). Expressed in hematopoietic cells, including CD34(+) leukocytes. Expressed in fetal liver (at protein level), brain, lung, kidney, heart, skeletal muscle, spleen and thymus. Expressed in leukemia cells. Abundantly expressed in ovarian cancer clear-cell adenocarcinoma.

The protein localises to the cell membrane. The catalysed reaction is (R)-carnitine(in) = (R)-carnitine(out). It catalyses the reaction spermidine(in) = spermidine(out). In terms of biological role, facilitative organic cation transporter that mediates the transport of carnitine as well as the polyamine spermidine. Mediates the partially Na(+)-dependent bidirectional transport of carnitine. May mediate L-carnitine secretion from testis epididymal epithelium into the lumen which is involved in the maturation of spermatozoa. This chain is Solute carrier family 22 member 16, found in Homo sapiens (Human).